The sequence spans 77 residues: Chaplin-H (77 aa).

The N-terminal stretch at 1–25 (MLKKVVAAAAATGGLVLAGAGMAVA) is a signal peptide. A Chaplin domain is found at 36–76 (SPGVLSGNVVQVPVHVPVNVCGNTISVIGLLNPAFGNVCIN). Forms amyloid fibrils in vitro regions lie at residues 38–54 (GVLS…VPVN) and 57–72 (GNTI…AFGN). An intrachain disulfide couples C56 to C74.

Belongs to the chaplin family. Short chaplin subfamily. Homodimer; disulfide linked. About 10% of ChpH isolated from cell wall forms disulfide-bonded homodimers.

It localises to the cell surface. The protein resides in the secreted. Its subcellular location is the cell wall. The protein localises to the fimbrium. One of 8 partially redundant surface-active proteins required for efficient formation of aerial mycelium; the short chaplins assemble into a hydrophobic, amyloidal fibrillar surface layer that envelopes and protects aerial hyphae and spores, presumably anchored to the long chaplins. Chaplins have an overlapping function with the surface-active SapB peptide; chaplins are essential on minimal medium while on rich medium both chaplins and SapB are required for efficient aerial hyphae formation. Chaplins are also involved in cell attachment to a hydrophobic surface. Forms amyloid fibrils in vitro probably composed of stacked beta-sheets. A small chaplin extract (ChpD, ChpE, ChpF, ChpG and ChpH) self-assembles into 2 different amyloids; small fibrils at the air-water interface form an amphipathic membrane that resembles spore-surface structures involved in aerial hyphae formation, and hydrophilic fibrils in solution that resemble the fibers that attach cells to a hydrophobic surface. At the air-water interface the hydrophilic surface is in contact with water (probably equivalent to the peptidoglycan layer), while the hydrophobic face is exposed to the air, making the surface of the aerial hyphae hydrophobic. A minimal chaplin strain capable of forming aerial mycelium/hyphae on minimal medium contains ChpC, ChpE and ChpH. The strain also has restored rodlet formation on the hyphae surface. A small chaplin extract applied to a chaplin-deficient strain restores aerial hyphae formation. The small chaplin extract forms an amyloid-like structure similar to that seen on the surface of cells without rodlets (rdlA-rdlB deletions), and is highly surface active, reducing surface tension from 72 to 26 mJ/m(2), which probably allows escape of hyphae from an aqueous environment into air. The sequence is that of Chaplin-H from Streptomyces coelicolor (strain ATCC BAA-471 / A3(2) / M145).